The following is a 1061-amino-acid chain: Zinc finger protein ZFPM1 (1061 aa).

Residues 152–185 (VVNKDVFPCKDCGIWYRSERNLQAHLMYYCASRQ) form a CCHC FOG-type 1 zinc finger. Zn(2+)-binding residues include Cys-160, Cys-163, His-176, and Cys-181. 3 C2H2-type zinc fingers span residues 204-228 (RICP…MRSH), 234-256 (FVCL…LKVH), and 262-285 (GVCH…VTNH). Disordered stretches follow at residues 349–393 (PSAT…SEET) and 435–455 (TEMS…GAAT). Low complexity predominate over residues 378–388 (SPISSSSSASS). The segment covering 436 to 448 (EMSSPTPGSSPVP) has biased composition (polar residues). The segment at 508-541 (SAVPKGATCFECEITFNNINNYYVHKRLYCSGRH) adopts a CCHC FOG-type 2 zinc-finger fold. Zn(2+) contacts are provided by Cys-516, Cys-519, His-532, and Cys-537. 2 disordered regions span residues 561–586 (ALAS…ESSA) and 599–630 (MDCE…NRTV). The segment covering 565 to 574 (GFSSTEQEAS) has biased composition (polar residues). Residues 623 to 656 (EEDPNRTVCGACNIRFSRHETYVVHKRYYCASRH) form a CCHC FOG-type 3 zinc finger. 4 residues coordinate Zn(2+): Cys-631, Cys-634, His-647, and Cys-652. Residues 661-681 (RRREVNKPGPPYTTQPTPRTR) are disordered. The interaction with CTBP stretch occupies residues 736–742 (PIDLSKK). Residues 759–792 (APLADYHECTACRISFNSLESYLAHKKFSCPTAP) form a CCHC FOG-type 4 zinc finger. Zn(2+)-binding residues include Cys-767, Cys-770, His-783, and Cys-788. The C2H2-type 4 zinc finger occupies 869–892 (TTCPYCPHNVIIRGDLLEHFRSVH). The tract at residues 917-1021 (RGQTSSASEN…MQPPKPSLIS (105 aa)) is disordered. Low complexity-rich tracts occupy residues 933–942 (VSSASPLQLP) and 954–972 (TTSS…STPR). The span at 973 to 984 (PLLPTSPAPPSN) shows a compositional bias: pro residues. The CCHC FOG-type 5 zinc finger occupies 1023–1056 (VPNGNHRYCRLCNIKFSSLSTFIAHKKYYCSSHA). Zn(2+)-binding residues include Cys-1031, Cys-1034, His-1047, and Cys-1052.

It belongs to the FOG (Friend of GATA) family. In terms of assembly, interacts with corepressor CTBP. Interacts with the N-terminal zinc-finger of GATA1 and probably GATA2. Predominantly expressed in heart and brain. Also expressed in ventral blood island and adult spleen.

Its subcellular location is the nucleus. Functionally, transcription regulator that plays an central role in red blood cell differentiation. Essential cofactor that acts via the formation of a heterodimer with transcription factors of the GATA family GATA1 and GATA2. Such heterodimer can both activate or repress transcriptional activity, depending on the cell and promoter context. Acts as a repressor of red blood cells, probably by modulating activity of GATA1. This Xenopus laevis (African clawed frog) protein is Zinc finger protein ZFPM1 (zfpm1).